The sequence spans 337 residues: tRNA pseudouridine synthase D (337 aa).

The active-site Nucleophile is Asp-77. The 157-residue stretch at 152–308 folds into the TRUD domain; sequence GFPNYFTEQR…ARDFHWEFVE (157 aa).

Belongs to the pseudouridine synthase TruD family.

It carries out the reaction uridine(13) in tRNA = pseudouridine(13) in tRNA. In terms of biological role, responsible for synthesis of pseudouridine from uracil-13 in transfer RNAs. The polypeptide is tRNA pseudouridine synthase D (Mannheimia succiniciproducens (strain KCTC 0769BP / MBEL55E)).